The sequence spans 185 residues: MIPELKKTTEQKMQKSIDVLKADLAKVRTGRAHTGLLDHVMVEYYGSMVPISQVSNVTLIDARTIGVQVWEKPMMQKVERAIRDSDLGLNPANQGDIIRVPMPALTEERRRDLTKVVRHEGEAAKVAIRNLRRDANQHLKDAVKDKTISEDDDRRAQEDIQKLTDRNIAEIDKLLAQKEQELMQL.

The protein belongs to the RRF family.

The protein localises to the cytoplasm. Its function is as follows. Responsible for the release of ribosomes from messenger RNA at the termination of protein biosynthesis. May increase the efficiency of translation by recycling ribosomes from one round of translation to another. In Aromatoleum aromaticum (strain DSM 19018 / LMG 30748 / EbN1) (Azoarcus sp. (strain EbN1)), this protein is Ribosome-recycling factor.